Consider the following 111-residue polypeptide: Exocrine gland-secreted peptide 22 (111 aa).

The signal sequence occupies residues 1–24 (MNSVPVMLFSISILLAAMLTEGRG).

The protein belongs to the exocrine gland-secreted peptide family. In terms of tissue distribution, expressed in acinar cells of the lacrimal gland from where it is secreted into tears. Not detected in a range of other tissues tested including other exocrine glands, internal organs and sensory epithelia.

It is found in the secreted. Its function is as follows. Pheromone produced by juveniles which activates a small number of vomeronasal organ sensory neurons and exhibits a powerful inhibitory effect on adult male mating behavior. The chain is Exocrine gland-secreted peptide 22 from Mus musculus (Mouse).